The chain runs to 562 residues: Sulfite reductase [NADPH] hemoprotein beta-component (562 aa).

[4Fe-4S] cluster contacts are provided by Cys425, Cys431, Cys470, and Cys474. Cys474 serves as a coordination point for siroheme.

The protein belongs to the nitrite and sulfite reductase 4Fe-4S domain family. Alpha(8)-beta(8). The alpha component is a flavoprotein, the beta component is a hemoprotein. Siroheme is required as a cofactor. Requires [4Fe-4S] cluster as cofactor.

The enzyme catalyses hydrogen sulfide + 3 NADP(+) + 3 H2O = sulfite + 3 NADPH + 4 H(+). The protein operates within sulfur metabolism; hydrogen sulfide biosynthesis; hydrogen sulfide from sulfite (NADPH route): step 1/1. Its function is as follows. Component of the sulfite reductase complex that catalyzes the 6-electron reduction of sulfite to sulfide. This is one of several activities required for the biosynthesis of L-cysteine from sulfate. The protein is Sulfite reductase [NADPH] hemoprotein beta-component of Tolumonas auensis (strain DSM 9187 / NBRC 110442 / TA 4).